The chain runs to 316 residues: DMOA farnesyltransferase nvfB (316 aa).

The next 9 helical transmembrane spans lie at 47–67 (VVGV…TILL), 71–91 (LILV…NDVI), 115–135 (WNAV…LSFL), 139–159 (CAIE…GKRF), 162–182 (FPQL…HSLG), 191–211 (PTFF…VVYS), 234–254 (IELL…AAGY), 258–278 (LGIP…LYFL), and 294–314 (KLAC…EYYL).

Belongs to the UbiA prenyltransferase family.

It is found in the membrane. It catalyses the reaction 3,5-dimethylorsellinate + (2E,6E)-farnesyl diphosphate = (3R)-3-farnesyl-6-hydroxy-2,3,5-trimethyl-4-oxocyclohexa-1,5-diene-1-carboxylate + diphosphate + H(+). Its pathway is secondary metabolite biosynthesis; terpenoid biosynthesis. Functionally, DMOA farnesyltransferase; part of the gene cluster that mediates the biosynthesis of novofumigatonin, a heavily oxygenated meroterpenoid containing a unique orthoester moiety. The first step of the pathway is the synthesis of 3,5-dimethylorsellinic acid (DMOA) by the polyketide synthase nvfA via condensation of one acetyl-CoA starter unit with 3 malonyl-CoA units and 2 methylations. DMOA is then converted to farnesyl-DMOA by the farnesyltransferase nvfB. Epoxydation by FAD-dependent monooxygenase nvfK, followed by a protonation-initiated cyclization catalyzed by the terpene cyclase nvfL leads to the production of asnavolin H. The short chain dehydrogenase nvfC then as a 3-OH dehydrogenase of asnovolin H to yield chemesin D. There are two branches to synthesize asnovolin A from chemesin D. In one branch, chemesin D undergoes Baeyer-Villiger oxidation by nvfH, methylation by nvfJ, and enoyl reduction by the nvfM D enoylreductase that reduces the double bond between C-5'and C-6', to form respectively asnovolin I, asnovolin K, and asnovolin A. In the other branch, the methylation precedes the Baeyer-Villiger oxidation and the enoyl reduction to yield asnovolin A via the asnovolin J intermediate. Asnovolin A is further converted to fumigatonoid A by the Fe(II)/2-oxoglutarate-dependent dioxygenase nvfI that catalyzes an endoperoxidation reaction. The alpha/beta hydrolase nvfD then acts as an epimerase that converts fumigatonoid A to its C-5' epimer, which then undergoes spontaneous or nvfD-catalyzed lactonization. The following step utilizes the ketoreductase nvfG to produce fumigatonoid B. The dioxygenase nvfE further converts fumigatonoid B into fumigatonoid C. Finally the Fe(II)/2-oxoglutarate-dependent dioxygenase nvfF catalyzes two rounds of oxidation to transform fumigatonoid C into the end product, novofumigatonin A. This Aspergillus novofumigatus (strain IBT 16806) protein is DMOA farnesyltransferase nvfB.